Reading from the N-terminus, the 896-residue chain is Probable DNA-directed RNA polymerase (896 aa).

Catalysis depends on residues Asp-546, Lys-617, and Asp-798.

This sequence belongs to the phage and mitochondrial RNA polymerase family.

The protein localises to the mitochondrion. It catalyses the reaction RNA(n) + a ribonucleoside 5'-triphosphate = RNA(n+1) + diphosphate. Its function is as follows. DNA-dependent RNA polymerase catalyzes the transcription of DNA into RNA using the four ribonucleoside triphosphates as substrates. This Neurospora crassa protein is Probable DNA-directed RNA polymerase.